The following is a 20-amino-acid chain: Cytochrome P450-RR1 (20 aa).

It belongs to the cytochrome P450 family. The cofactor is heme.

In terms of biological role, P450-RRI catalyzes the O-dealkylation of 2-ethoxyphenol and 2-methoxyphenol to produce catechol. The cytochrome binds other ortho-substituted phenols, including 2-ethoxyphenol, 2-methylphenol and 2-chlorophenol. The protein is Cytochrome P450-RR1 of Rhodococcus rhodochrous.